Reading from the N-terminus, the 315-residue chain is Hydroxysteroid 11-beta-dehydrogenase 1-like protein (315 aa).

The signal sequence occupies residues methionine 1–alanine 15. Residues glycine 36–threonine 62, aspartate 87–methionine 88, and asparagine 114–isoleucine 116 contribute to the NADP(+) site. Position 165 (serine 165) interacts with substrate. Tyrosine 178 serves as the catalytic Proton acceptor. NADP(+)-binding positions include tyrosine 178 to lysine 182 and glycine 211 to serine 217. The interval alanine 221–leucine 286 is disordered. A compositionally biased stretch (basic and acidic residues) spans serine 277–leucine 286.

Belongs to the short-chain dehydrogenases/reductases (SDR) family. In terms of tissue distribution, highly expressed in the brain.

It is found in the secreted. The catalysed reaction is cortisone + NADPH + H(+) = cortisol + NADP(+). Unidirectional NADP(+)-dependent cortisol dehydrogenase (in vitro). This Homo sapiens (Human) protein is Hydroxysteroid 11-beta-dehydrogenase 1-like protein (HSD11B1L).